Here is a 291-residue protein sequence, read N- to C-terminus: 4-diphosphocytidyl-2-C-methyl-D-erythritol kinase (291 aa).

The active site involves K11. An ATP-binding site is contributed by 97 to 107 (PVAAGIGGGSS). Residue D139 is part of the active site.

Belongs to the GHMP kinase family. IspE subfamily.

The enzyme catalyses 4-CDP-2-C-methyl-D-erythritol + ATP = 4-CDP-2-C-methyl-D-erythritol 2-phosphate + ADP + H(+). It functions in the pathway isoprenoid biosynthesis; isopentenyl diphosphate biosynthesis via DXP pathway; isopentenyl diphosphate from 1-deoxy-D-xylulose 5-phosphate: step 3/6. Functionally, catalyzes the phosphorylation of the position 2 hydroxy group of 4-diphosphocytidyl-2C-methyl-D-erythritol. In Methylorubrum extorquens (strain CM4 / NCIMB 13688) (Methylobacterium extorquens), this protein is 4-diphosphocytidyl-2-C-methyl-D-erythritol kinase.